We begin with the raw amino-acid sequence, 280 residues long: Hematopoietically-expressed homeobox protein HHEX homolog (280 aa).

2 disordered regions span residues 1–35 (MSTL…GLAP) and 221–280 (RRVK…EKEA). Residues 165 to 224 (RKGGQVRFSNDQTMELEKKFESQKYLSPPERKKLAKLLQLSERQVKTWFQNRRAKWRRVK) constitute a DNA-binding region (homeobox). Residues 232–252 (GEGDENSHEKPRDLDRDDFSR) are compositionally biased toward basic and acidic residues.

It localises to the nucleus. Its function is as follows. Transcription factor that may play a central role in activating or maintaining gene expression in the vegetal pole. Part of a gene regulatory circuit with Erg and Tgif that operates early in mesoderm development. This Patiria miniata (Bat star) protein is Hematopoietically-expressed homeobox protein HHEX homolog.